Here is a 476-residue protein sequence, read N- to C-terminus: 4-(hydroxymethyl)benzenesulfonate dehydrogenase TsaD1 (476 aa).

Residues 154-155 (WN), 178-181 (KAAE), and 230-231 (GS) each bind NAD(+). Glutamate 252 (proton acceptor) is an active-site residue. Residue leucine 253 participates in NAD(+) binding. Catalysis depends on cysteine 286, which acts as the Nucleophile. NAD(+) is bound at residue glutamate 380.

This sequence belongs to the aldehyde dehydrogenase family. As to quaternary structure, homodimer.

It catalyses the reaction 4-(hydroxymethyl)benzenesulfonate + NAD(+) = 4-formylbenzenesulfonate + NADH + H(+). Functionally, involved in the toluene-4-sulfonate degradation pathway. Does not discriminate between the sulfonate and the carboxyl substituents and can also be involved in the p-toluenecarboxylate degradation pathway. The protein is 4-(hydroxymethyl)benzenesulfonate dehydrogenase TsaD1 (tsaD1) of Comamonas testosteroni (Pseudomonas testosteroni).